A 123-amino-acid polypeptide reads, in one-letter code: Large ribosomal subunit protein uL14 (123 aa).

This sequence belongs to the universal ribosomal protein uL14 family. Part of the 50S ribosomal subunit. Forms a cluster with proteins L3 and L19. In the 70S ribosome, L14 and L19 interact and together make contacts with the 16S rRNA in bridges B5 and B8.

In terms of biological role, binds to 23S rRNA. Forms part of two intersubunit bridges in the 70S ribosome. The protein is Large ribosomal subunit protein uL14 of Serratia proteamaculans (strain 568).